A 434-amino-acid polypeptide reads, in one-letter code: Eukaryotic translation initiation factor 3 subunit E (434 aa).

Residues 219 to 392 enclose the PCI domain; it reads FFNHPKGRDL…GHVVMGTQPL (174 aa).

Belongs to the eIF-3 subunit E family. In terms of assembly, component of the eukaryotic translation initiation factor 3 (eIF-3) complex. The eIF-3 complex interacts with pix. Interacts with mxt.

It localises to the cytoplasm. Functionally, component of the eukaryotic translation initiation factor 3 (eIF-3) complex, which is involved in protein synthesis of a specialized repertoire of mRNAs and, together with other initiation factors, stimulates binding of mRNA and methionyl-tRNAi to the 40S ribosome. The eIF-3 complex specifically targets and initiates translation of a subset of mRNAs involved in cell proliferation. The protein is Eukaryotic translation initiation factor 3 subunit E (eIF3-S6) of Drosophila ananassae (Fruit fly).